A 149-amino-acid polypeptide reads, in one-letter code: Ribosome maturation factor RimP (149 aa).

The protein belongs to the RimP family.

The protein localises to the cytoplasm. Functionally, required for maturation of 30S ribosomal subunits. The chain is Ribosome maturation factor RimP from Clostridium acetobutylicum (strain ATCC 824 / DSM 792 / JCM 1419 / IAM 19013 / LMG 5710 / NBRC 13948 / NRRL B-527 / VKM B-1787 / 2291 / W).